A 269-amino-acid chain; its full sequence is MSRLQTRFAQLKEQNRAALVTFVTAGDPGYDTSLAILKGLPAAGADVIELGMPFTDPMADGPAIQLANIRALEAKQNLVKTLQMVREFRKDNNDTPLVLMGYFNPIHKYGVPKFIADAKEAGVDGLIVVDMPPEHNGELCDPAQAAGIDFIRLTTPTTDDVRLPTVLNGSSGFVYYVSVAGVTGAGAATLEHVEEAVTRLRRHTDLPISIGFGIRTPEQAAAIARLADGVVVGSALIDHIANASNDQQAIDGVLSLCAALSEGVRNARK.

Active-site proton acceptor residues include Glu49 and Asp60.

It belongs to the TrpA family. Tetramer of two alpha and two beta chains.

The catalysed reaction is (1S,2R)-1-C-(indol-3-yl)glycerol 3-phosphate + L-serine = D-glyceraldehyde 3-phosphate + L-tryptophan + H2O. It participates in amino-acid biosynthesis; L-tryptophan biosynthesis; L-tryptophan from chorismate: step 5/5. The alpha subunit is responsible for the aldol cleavage of indoleglycerol phosphate to indole and glyceraldehyde 3-phosphate. This Pseudomonas fluorescens (strain SBW25) protein is Tryptophan synthase alpha chain.